Here is an 80-residue protein sequence, read N- to C-terminus: Acyl carrier protein (80 aa).

A Carrier domain is found at 4–79 (DEIFSKVRSI…DVVNFIKKRK (76 aa)). Ser39 is subject to O-(pantetheine 4'-phosphoryl)serine.

This sequence belongs to the acyl carrier protein (ACP) family. In terms of processing, 4'-phosphopantetheine is transferred from CoA to a specific serine of apo-ACP by AcpS. This modification is essential for activity because fatty acids are bound in thioester linkage to the sulfhydryl of the prosthetic group.

It is found in the cytoplasm. Its pathway is lipid metabolism; fatty acid biosynthesis. In terms of biological role, carrier of the growing fatty acid chain in fatty acid biosynthesis. This is Acyl carrier protein from Borreliella burgdorferi (strain ATCC 35210 / DSM 4680 / CIP 102532 / B31) (Borrelia burgdorferi).